We begin with the raw amino-acid sequence, 126 residues long: Small ribosomal subunit protein uS13 (126 aa).

Residues 99-126 are disordered; that stretch reads LRGQSTKNNARTRKGKRKTVANKKRVTK. The segment covering 108 to 126 has biased composition (basic residues); it reads ARTRKGKRKTVANKKRVTK.

This sequence belongs to the universal ribosomal protein uS13 family. In terms of assembly, part of the 30S ribosomal subunit. Forms a loose heterodimer with protein S19. Forms two bridges to the 50S subunit in the 70S ribosome.

Functionally, located at the top of the head of the 30S subunit, it contacts several helices of the 16S rRNA. In the 70S ribosome it contacts the 23S rRNA (bridge B1a) and protein L5 of the 50S subunit (bridge B1b), connecting the 2 subunits; these bridges are implicated in subunit movement. Contacts the tRNAs in the A and P-sites. This Azobacteroides pseudotrichonymphae genomovar. CFP2 protein is Small ribosomal subunit protein uS13.